The sequence spans 343 residues: 3-dehydroquinate synthase (343 aa).

NAD(+) contacts are provided by residues 61 to 66, 95 to 99, 119 to 120, Lys132, Lys141, and 159 to 162; these read SGEKYK, GVISD, TT, and FLKT. Zn(2+) is bound by residues Glu174, His231, and His248.

Belongs to the sugar phosphate cyclases superfamily. Dehydroquinate synthase family. Co(2+) is required as a cofactor. Zn(2+) serves as cofactor. It depends on NAD(+) as a cofactor.

It localises to the cytoplasm. It catalyses the reaction 7-phospho-2-dehydro-3-deoxy-D-arabino-heptonate = 3-dehydroquinate + phosphate. Its pathway is metabolic intermediate biosynthesis; chorismate biosynthesis; chorismate from D-erythrose 4-phosphate and phosphoenolpyruvate: step 2/7. Catalyzes the conversion of 3-deoxy-D-arabino-heptulosonate 7-phosphate (DAHP) to dehydroquinate (DHQ). This chain is 3-dehydroquinate synthase, found in Helicobacter pylori (strain P12).